Reading from the N-terminus, the 150-residue chain is 3-hydroxyacyl-[acyl-carrier-protein] dehydratase FabZ (150 aa).

His-51 is a catalytic residue.

The protein belongs to the thioester dehydratase family. FabZ subfamily.

Its subcellular location is the cytoplasm. It carries out the reaction a (3R)-hydroxyacyl-[ACP] = a (2E)-enoyl-[ACP] + H2O. Functionally, involved in unsaturated fatty acids biosynthesis. Catalyzes the dehydration of short chain beta-hydroxyacyl-ACPs and long chain saturated and unsaturated beta-hydroxyacyl-ACPs. This Rubrobacter xylanophilus (strain DSM 9941 / JCM 11954 / NBRC 16129 / PRD-1) protein is 3-hydroxyacyl-[acyl-carrier-protein] dehydratase FabZ.